Reading from the N-terminus, the 323-residue chain is GILT-like protein C02D5.2 (323 aa).

The chain crosses the membrane as a helical span at residues 13 to 32; the sequence is LICRPILTFSSLHILTAFLI. N-linked (GlcNAc...) asparagine glycosylation is present at asparagine 35. Transmembrane regions (helical) follow at residues 37-59 and 87-104; these read SYIN…HRFL and YIYG…YRSL. N-linked (GlcNAc...) asparagine glycosylation occurs at asparagine 289.

Belongs to the GILT family.

The protein resides in the membrane. The chain is GILT-like protein C02D5.2 from Caenorhabditis elegans.